We begin with the raw amino-acid sequence, 193 residues long: Dual-action ribosomal maturation protein DarP (193 aa).

A compositionally biased stretch (basic and acidic residues) spans 1 to 10 (MRGRDEDTGE). 2 disordered regions span residues 1–20 (MRGR…SQQR) and 171–193 (QEQG…EDDE). Acidic residues predominate over residues 181–193 (GLEDGESALEDDE).

The protein belongs to the DarP family.

The protein resides in the cytoplasm. Member of a network of 50S ribosomal subunit biogenesis factors which assembles along the 30S-50S interface, preventing incorrect 23S rRNA structures from forming. Promotes peptidyl transferase center (PTC) maturation. The polypeptide is Dual-action ribosomal maturation protein DarP (Xanthomonas oryzae pv. oryzae (strain MAFF 311018)).